We begin with the raw amino-acid sequence, 404 residues long: Pectate lyase E (404 aa).

The first 41 residues, 1–41, serve as a signal peptide directing secretion; that stretch reads MNNSRMSSVSTQKTTGRSALGTKSALAAIIATTMMVSVASA. D182 and D225 together coordinate Ca(2+). R278 is a catalytic residue.

It belongs to the polysaccharide lyase 1 family. PLBC subfamily. Requires Ca(2+) as cofactor.

The protein resides in the secreted. The catalysed reaction is Eliminative cleavage of (1-&gt;4)-alpha-D-galacturonan to give oligosaccharides with 4-deoxy-alpha-D-galact-4-enuronosyl groups at their non-reducing ends.. It functions in the pathway glycan metabolism; pectin degradation; 2-dehydro-3-deoxy-D-gluconate from pectin: step 2/5. Involved in maceration and soft-rotting of plant tissue. Pectate lyases have been implicated as pathogenicity factors which induce maceration or rotting of plant tissue. PelE is sufficient to induce these effects under laboratory conditions. This is Pectate lyase E (pelE) from Dickeya dadantii (strain 3937) (Erwinia chrysanthemi (strain 3937)).